Consider the following 480-residue polypeptide: UDP-N-acetylmuramoylalanine--D-glutamate ligase (480 aa).

110–116 is a binding site for ATP; sequence GTNGKST.

The protein belongs to the MurCDEF family.

It is found in the cytoplasm. It carries out the reaction UDP-N-acetyl-alpha-D-muramoyl-L-alanine + D-glutamate + ATP = UDP-N-acetyl-alpha-D-muramoyl-L-alanyl-D-glutamate + ADP + phosphate + H(+). It participates in cell wall biogenesis; peptidoglycan biosynthesis. Its function is as follows. Cell wall formation. Catalyzes the addition of glutamate to the nucleotide precursor UDP-N-acetylmuramoyl-L-alanine (UMA). The polypeptide is UDP-N-acetylmuramoylalanine--D-glutamate ligase (Synechococcus sp. (strain JA-2-3B'a(2-13)) (Cyanobacteria bacterium Yellowstone B-Prime)).